We begin with the raw amino-acid sequence, 390 residues long: Cell division protein FtsZ (390 aa).

GTP contacts are provided by residues 20–24, 106–108, Glu137, Arg141, and Asp184; these read GGGNN and GTG.

It belongs to the FtsZ family. As to quaternary structure, homodimer. Polymerizes to form a dynamic ring structure in a strictly GTP-dependent manner. Interacts directly with several other division proteins.

It localises to the cytoplasm. In terms of biological role, essential cell division protein that forms a contractile ring structure (Z ring) at the future cell division site. The regulation of the ring assembly controls the timing and the location of cell division. One of the functions of the FtsZ ring is to recruit other cell division proteins to the septum to produce a new cell wall between the dividing cells. Binds GTP and shows GTPase activity. This is Cell division protein FtsZ from Mycoplasmopsis pulmonis (strain UAB CTIP) (Mycoplasma pulmonis).